The sequence spans 535 residues: 3-hydroxyindolin-2-one monooxygenase (535 aa).

2 consecutive transmembrane segments (helical) span residues 14-34 (VVQCTPTQAAAVLGVLLLLAI) and 469-489 (ICAGATFAIATVEIMLANLIY). Cys-470 contacts heme.

It belongs to the cytochrome P450 family. Heme serves as cofactor.

It localises to the membrane. It carries out the reaction 3-hydroxyindolin-2-one + reduced [NADPH--hemoprotein reductase] + O2 = 2-hydroxy-2H-1,4-benzoxazin-3(4H)-one + oxidized [NADPH--hemoprotein reductase] + H2O + H(+). It functions in the pathway secondary metabolite biosynthesis; 2,4-dihydroxy-1,4-benzoxazin-3-one biosynthesis; 2,4-dihydroxy-1,4-benzoxazin-3-one from indoleglycerol phosphate: step 4/5. Catalyzes the conversion of 3-hydroxyindolin-2-one to 2-hydroxy-1,4-benzoxazin-3-one (HBOA). This is 3-hydroxyindolin-2-one monooxygenase (CYP71C1) from Zea mays (Maize).